Consider the following 825-residue polypeptide: Probable phosphoketolase (825 aa).

It belongs to the XFP family. Requires thiamine diphosphate as cofactor.

This Bifidobacterium animalis subsp. lactis (strain AD011) protein is Probable phosphoketolase.